The following is a 302-amino-acid chain: Glutaminase (302 aa).

Residues serine 61, asparagine 111, glutamate 155, asparagine 162, tyrosine 186, tyrosine 238, and valine 256 each coordinate substrate.

Belongs to the glutaminase family. As to quaternary structure, homotetramer.

The enzyme catalyses L-glutamine + H2O = L-glutamate + NH4(+). This Pseudomonas aeruginosa (strain LESB58) protein is Glutaminase.